Reading from the N-terminus, the 410-residue chain is Elongation factor Tu, chloroplastic (410 aa).

In terms of domain architecture, tr-type G spans 10–215 (KPHVNIGTIG…NVDSYIPTPE (206 aa)). Residues 19–26 (GHVDHGKT) are G1. Position 19–26 (19–26 (GHVDHGKT)) interacts with GTP. T26 is a binding site for Mg(2+). Positions 61–65 (GITIN) are G2. Residues 82–85 (DCPG) are G3. GTP is bound by residues 82-86 (DCPGH) and 137-140 (NKKD). The G4 stretch occupies residues 137–140 (NKKD). The tract at residues 175–177 (SAL) is G5.

Belongs to the TRAFAC class translation factor GTPase superfamily. Classic translation factor GTPase family. EF-Tu/EF-1A subfamily.

The protein localises to the plastid. Its subcellular location is the chloroplast. It carries out the reaction GTP + H2O = GDP + phosphate + H(+). In terms of biological role, GTP hydrolase that promotes the GTP-dependent binding of aminoacyl-tRNA to the A-site of ribosomes during protein biosynthesis. This Oltmannsiellopsis viridis (Marine flagellate) protein is Elongation factor Tu, chloroplastic (tufA).